We begin with the raw amino-acid sequence, 1086 residues long: MKLLYTDIENSLTEILVQEAEVFANSGARVFYIAPNSLSFEKERTVLEHLTKESSFSITVTRFAQMARYFTLNKQKAQKSLDDLSLTMLFHLVLHDLSQNELTIYHALKSDQTFIKQLVDLFKEMQSANLTIADIEMENLARKEDLITIFSALSRELLRYDFQQMSSLAVFQEAIRSGLLDQELAKTVVIIDGFTRFSAEEESLIHQLHQKCQEIVIGTYISSKAMKQNFTKGNLYEASIDFLRQLSVTYQVKSLYLSGEKTFKNSFTTMSRLLESQYDYSLTELTISEDIKNDVQIWQQLNQKEEIENIARDIRQKLNEGYRYKDILVLLGDVEAYQLQVGPIFDKYDIPYYLGKAESMSHHPLVQFMDSLENCRRYNWRKEDIINLLKSRMLGDFTIRECDQFESYLNYADINGFTAFSKDFTANTFNQKNEKGYDLDKINLIRKYLFSHLNQFFKSRAQKGSNILNHFLQFLSDIDFVSSFQRLSQKQSALQQEKDEEVWKSFTSILESFYNIFKDETLTQELTLMLIKSAMQAADYRVVPATLDVVSVKSYDLVEPHSKSLVYALGLTRTHFPKTVQQTGLISDQERAKTNEKWDSHHRFDISSIENSKKNHYTALSLFNAATDKLVLSYPMVLNEVVEEASPYLKLLHSFGIPIVEKQKNTFSDLENGIGNYKSLLSQWIALNQEPLTEELYQEEKSFWLVMSRYLKKQLAAKKLTFPEQKSHLATSRLSPEVLAIKYPDHQPLSLSSSALTVYHDNQYKYFLQYVLGLQELESIHPDARHHGTYLHRVFEYVVDDQRSIPFDDKIEEAIQRTNQERLFQTYYQSDAESRFSLSLLEDIAKSTASIFPITPTKVLSQEERFQLHFDEKVRVNGIIDRIDQLDDGSIGIVDYKSSQTVFDIGKFYNGLNSQLPTYLEALNTREKSKDMPPQLFGAMYLHMQDPKMDLNEFKLFDDKVVEKLYSRLTYKGIFLEREKEHLASGAYQMKSNLYSEEELRNLLDYNQFLYLKAEKEIRAGHFLINPYTEDGKTVKGDQLKAITRFEADLDLGQARMLLKLPTKEKREGFLKLMKEDMKGGKKDEI.

Belongs to the helicase family. AddB/RexB type 2 subfamily. As to quaternary structure, heterodimer of AddA and RexB. The cofactor is Mg(2+).

In terms of biological role, the heterodimer acts as both an ATP-dependent DNA helicase and an ATP-dependent, dual-direction single-stranded exonuclease. Recognizes the chi site generating a DNA molecule suitable for the initiation of homologous recombination. This subunit has 5' -&gt; 3' nuclease activity but not helicase activity. This chain is ATP-dependent helicase/deoxyribonuclease subunit B, found in Streptococcus uberis (strain ATCC BAA-854 / 0140J).